Consider the following 167-residue polypeptide: Small ribosomal subunit protein uS5 (167 aa).

The S5 DRBM domain occupies 12-75; it reads LQEKLVAVNR…EKARRNIVSV (64 aa).

The protein belongs to the universal ribosomal protein uS5 family. Part of the 30S ribosomal subunit. Contacts proteins S4 and S8.

In terms of biological role, with S4 and S12 plays an important role in translational accuracy. Functionally, located at the back of the 30S subunit body where it stabilizes the conformation of the head with respect to the body. The protein is Small ribosomal subunit protein uS5 of Shewanella loihica (strain ATCC BAA-1088 / PV-4).